A 554-amino-acid chain; its full sequence is Trimethyltridecatetraene synthase (554 aa).

A helical transmembrane segment spans residues 1–21 (MSAAVALAVILAVYVVLRYIS). A heme-binding site is contributed by Cys-464.

Belongs to the cytochrome P450 family. Heme serves as cofactor.

The protein localises to the membrane. The catalysed reaction is (6E,10E)-geranyllinalool + reduced [NADPH--hemoprotein reductase] + O2 = (3E,7E)-4,8,12-trimethyltrideca 1,3,7,11-tetraene + but-3-en-2-one + oxidized [NADPH--hemoprotein reductase] + 2 H2O + H(+). It participates in secondary metabolite biosynthesis; terpenoid biosynthesis. In terms of biological role, component of the volatile terpenes biosynthesis pathways. Converts mainly geranyllinalool to trimethyltridecatetraene (TMTT). The chain is Trimethyltridecatetraene synthase from Zea mays (Maize).